The primary structure comprises 90 residues: Large ribosomal subunit protein eL31 (90 aa).

Belongs to the eukaryotic ribosomal protein eL31 family.

This chain is Large ribosomal subunit protein eL31, found in Natronomonas pharaonis (strain ATCC 35678 / DSM 2160 / CIP 103997 / JCM 8858 / NBRC 14720 / NCIMB 2260 / Gabara) (Halobacterium pharaonis).